The following is a 292-amino-acid chain: 4-hydroxy-tetrahydrodipicolinate synthase (292 aa).

T45 contacts pyruvate. Catalysis depends on Y133, which acts as the Proton donor/acceptor. K161 serves as the catalytic Schiff-base intermediate with substrate. Residue I203 participates in pyruvate binding.

This sequence belongs to the DapA family. As to quaternary structure, homotetramer; dimer of dimers.

It localises to the cytoplasm. The enzyme catalyses L-aspartate 4-semialdehyde + pyruvate = (2S,4S)-4-hydroxy-2,3,4,5-tetrahydrodipicolinate + H2O + H(+). It participates in amino-acid biosynthesis; L-lysine biosynthesis via DAP pathway; (S)-tetrahydrodipicolinate from L-aspartate: step 3/4. Catalyzes the condensation of (S)-aspartate-beta-semialdehyde [(S)-ASA] and pyruvate to 4-hydroxy-tetrahydrodipicolinate (HTPA). This Acidiphilium cryptum (strain JF-5) protein is 4-hydroxy-tetrahydrodipicolinate synthase.